The sequence spans 107 residues: MENAFKLLYKTIEERKGSPLPESYTNYLFSKGEDKILKKIGEECAEVIIACKNNDKEEVVKEMVDVFYHCFVLLAEKNIALEDVMREVKERNGKLSRVGDRREIDTL.

The protein belongs to the PRA-PH family.

The protein localises to the cytoplasm. It catalyses the reaction 1-(5-phospho-beta-D-ribosyl)-ATP + H2O = 1-(5-phospho-beta-D-ribosyl)-5'-AMP + diphosphate + H(+). The protein operates within amino-acid biosynthesis; L-histidine biosynthesis; L-histidine from 5-phospho-alpha-D-ribose 1-diphosphate: step 2/9. This chain is Phosphoribosyl-ATP pyrophosphatase, found in Bacillus cereus (strain ATCC 14579 / DSM 31 / CCUG 7414 / JCM 2152 / NBRC 15305 / NCIMB 9373 / NCTC 2599 / NRRL B-3711).